The chain runs to 351 residues: UDP-3-O-acylglucosamine N-acyltransferase (351 aa).

Residue histidine 240 is the Proton acceptor of the active site.

It belongs to the transferase hexapeptide repeat family. LpxD subfamily. In terms of assembly, homotrimer.

The catalysed reaction is a UDP-3-O-[(3R)-3-hydroxyacyl]-alpha-D-glucosamine + a (3R)-hydroxyacyl-[ACP] = a UDP-2-N,3-O-bis[(3R)-3-hydroxyacyl]-alpha-D-glucosamine + holo-[ACP] + H(+). Its pathway is bacterial outer membrane biogenesis; LPS lipid A biosynthesis. Functionally, catalyzes the N-acylation of UDP-3-O-acylglucosamine using 3-hydroxyacyl-ACP as the acyl donor. Is involved in the biosynthesis of lipid A, a phosphorylated glycolipid that anchors the lipopolysaccharide to the outer membrane of the cell. In Ectopseudomonas mendocina (strain ymp) (Pseudomonas mendocina), this protein is UDP-3-O-acylglucosamine N-acyltransferase.